A 238-amino-acid polypeptide reads, in one-letter code: Pyridoxine 5'-phosphate synthase (238 aa).

N7 contacts 3-amino-2-oxopropyl phosphate. Residue 9 to 10 (DH) coordinates 1-deoxy-D-xylulose 5-phosphate. 3-amino-2-oxopropyl phosphate is bound at residue R18. Residue H43 is the Proton acceptor of the active site. Positions 45 and 50 each coordinate 1-deoxy-D-xylulose 5-phosphate. The active-site Proton acceptor is the E70. Residue T100 coordinates 1-deoxy-D-xylulose 5-phosphate. The active-site Proton donor is H190. 3-amino-2-oxopropyl phosphate is bound by residues G191 and 212–213 (GH).

The protein belongs to the PNP synthase family. Homooctamer; tetramer of dimers.

The protein resides in the cytoplasm. It catalyses the reaction 3-amino-2-oxopropyl phosphate + 1-deoxy-D-xylulose 5-phosphate = pyridoxine 5'-phosphate + phosphate + 2 H2O + H(+). It functions in the pathway cofactor biosynthesis; pyridoxine 5'-phosphate biosynthesis; pyridoxine 5'-phosphate from D-erythrose 4-phosphate: step 5/5. In terms of biological role, catalyzes the complicated ring closure reaction between the two acyclic compounds 1-deoxy-D-xylulose-5-phosphate (DXP) and 3-amino-2-oxopropyl phosphate (1-amino-acetone-3-phosphate or AAP) to form pyridoxine 5'-phosphate (PNP) and inorganic phosphate. This chain is Pyridoxine 5'-phosphate synthase, found in Prochlorococcus marinus subsp. pastoris (strain CCMP1986 / NIES-2087 / MED4).